Here is a 535-residue protein sequence, read N- to C-terminus: Light-independent protochlorophyllide reductase subunit B (535 aa).

Aspartate 36 is a binding site for [4Fe-4S] cluster. The Proton donor role is filled by aspartate 292. 428–429 (GL) is a substrate binding site.

This sequence belongs to the ChlB/BchB/BchZ family. Protochlorophyllide reductase is composed of three subunits; BchL, BchN and BchB. Forms a heterotetramer of two BchB and two BchN subunits. It depends on [4Fe-4S] cluster as a cofactor.

The enzyme catalyses chlorophyllide a + oxidized 2[4Fe-4S]-[ferredoxin] + 2 ADP + 2 phosphate = protochlorophyllide a + reduced 2[4Fe-4S]-[ferredoxin] + 2 ATP + 2 H2O. Its pathway is porphyrin-containing compound metabolism; bacteriochlorophyll biosynthesis (light-independent). Its function is as follows. Component of the dark-operative protochlorophyllide reductase (DPOR) that uses Mg-ATP and reduced ferredoxin to reduce ring D of protochlorophyllide (Pchlide) to form chlorophyllide a (Chlide). This reaction is light-independent. The NB-protein (BchN-BchB) is the catalytic component of the complex. This Pelodictyon phaeoclathratiforme (strain DSM 5477 / BU-1) protein is Light-independent protochlorophyllide reductase subunit B.